A 214-amino-acid chain; its full sequence is ATP phosphoribosyltransferase (214 aa).

It belongs to the ATP phosphoribosyltransferase family. Short subfamily. Heteromultimer composed of HisG and HisZ subunits.

It is found in the cytoplasm. The catalysed reaction is 1-(5-phospho-beta-D-ribosyl)-ATP + diphosphate = 5-phospho-alpha-D-ribose 1-diphosphate + ATP. It participates in amino-acid biosynthesis; L-histidine biosynthesis; L-histidine from 5-phospho-alpha-D-ribose 1-diphosphate: step 1/9. Catalyzes the condensation of ATP and 5-phosphoribose 1-diphosphate to form N'-(5'-phosphoribosyl)-ATP (PR-ATP). Has a crucial role in the pathway because the rate of histidine biosynthesis seems to be controlled primarily by regulation of HisG enzymatic activity. The sequence is that of ATP phosphoribosyltransferase from Streptococcus sanguinis (strain SK36).